The chain runs to 676 residues: Zinc finger CCCH domain-containing protein 38 (676 aa).

Disordered regions lie at residues 1–134 (MEMS…DHLF), 172–217 (SSDY…RSSN), 245–307 (RKQP…SWID), 487–506 (SVQP…NPNQ), and 533–594 (IQEV…DPKG). The span at 12 to 21 (SKWDSKEDTH) shows a compositional bias: basic and acidic residues. Over residues 58–79 (RVSQNNDNSYFSEQDGTRQQFV) the composition is skewed to polar residues. Composition is skewed to basic and acidic residues over residues 101–110 (ARRDAGSYDR), 124–134 (EFNKRGSDHLF), and 192–212 (SEFT…EGGF). The segment at 214 to 243 (RSSNIPCKFFAAGTGFCRNGKYCRFSHHVA) adopts a C3H1-type zinc-finger fold. A compositionally biased stretch (low complexity) spans 251–262 (NNNNFYRQDNNN). Residues 269–278 (KWNDVERLDN) show a composition bias toward basic and acidic residues. Residues 538–562 (LDPKENGDKKTDEASKEEEGKKTGE) show a composition bias toward basic and acidic residues. The span at 563 to 583 (DTNDAENVVDEDEDGDDDGSD) shows a compositional bias: acidic residues. Basic and acidic residues predominate over residues 584-594 (EENKKEKDPKG).

This is Zinc finger CCCH domain-containing protein 38 from Arabidopsis thaliana (Mouse-ear cress).